Consider the following 131-residue polypeptide: ATP synthase epsilon chain (131 aa).

This sequence belongs to the ATPase epsilon chain family. F-type ATPases have 2 components, CF(1) - the catalytic core - and CF(0) - the membrane proton channel. CF(1) has five subunits: alpha(3), beta(3), gamma(1), delta(1), epsilon(1). CF(0) has three main subunits: a, b and c.

The protein resides in the cell membrane. Produces ATP from ADP in the presence of a proton gradient across the membrane. This chain is ATP synthase epsilon chain, found in Clostridium novyi (strain NT).